A 405-amino-acid chain; its full sequence is Protein NCA1 (405 aa).

The interval 1–85 (MTTTSVCPFS…GNLNKDSTDS (85 aa)) is disordered. Composition is skewed to basic and acidic residues over residues 13-24 (ARPDDGSTRKQG) and 37-48 (ARPDDASARKQG). Positions 76–85 (GNLNKDSTDS) are enriched in polar residues. The segment at 108–142 (CMLCQALLYESSRCVPCTHVFCKVCLTRFKDCPLC) adopts an RING-type zinc-finger fold. TPR repeat units lie at residues 247 to 280 (GAVL…LMKL) and 292 to 325 (SVSL…RRDA).

Interacts with the catalases CAT1, CAT2 and CAT3. This interaction is not induced by alkaline stress or H(2)O(2) and NaCl treatments. In terms of tissue distribution, expressed in roots, stems, leaves, flowers and siliques.

The protein localises to the cytoplasm. Its subcellular location is the nucleus. Functionally, has holdase chaperone activity that may fold catalase to a functional structure. Not required for the peroxisome import of catalases. Required for the activity of catalases and acts mainly at the post-transcriptional level. The chain is Protein NCA1 from Arabidopsis thaliana (Mouse-ear cress).